Reading from the N-terminus, the 348-residue chain is Sulfate/thiosulfate import ATP-binding protein CysA (348 aa).

In terms of domain architecture, ABC transporter spans 3–237; that stretch reads IRIQELCKQF…PSSPFVYSFV (235 aa). 35–42 serves as a coordination point for ATP; the sequence is GPSGSGKT.

This sequence belongs to the ABC transporter superfamily. Sulfate/tungstate importer (TC 3.A.1.6) family. As to quaternary structure, the complex is composed of two ATP-binding proteins (CysA), two transmembrane proteins (CysT and CysW) and a solute-binding protein (CysP).

The protein localises to the cell inner membrane. The catalysed reaction is sulfate(out) + ATP + H2O = sulfate(in) + ADP + phosphate + H(+). It catalyses the reaction thiosulfate(out) + ATP + H2O = thiosulfate(in) + ADP + phosphate + H(+). Part of the ABC transporter complex CysAWTP involved in sulfate/thiosulfate import. Responsible for energy coupling to the transport system. The protein is Sulfate/thiosulfate import ATP-binding protein CysA of Xylella fastidiosa (strain 9a5c).